Reading from the N-terminus, the 208-residue chain is Glutathione S-transferase GstB (208 aa).

The 83-residue stretch at 1-83 (MITLWGRNNS…YLAAQYGQKR (83 aa)) folds into the GST N-terminal domain. Glutathione contacts are provided by residues N12, N39, V53, and 67–68 (ES). The GST C-terminal domain occupies 88–208 (SPARRAEAEK…VRKVVMIPVS (121 aa)).

This sequence belongs to the GST superfamily.

The enzyme catalyses RX + glutathione = an S-substituted glutathione + a halide anion + H(+). Its function is as follows. Conjugation of reduced glutathione to a wide number of exogenous and endogenous hydrophobic electrophiles. In Escherichia coli O6:H1 (strain CFT073 / ATCC 700928 / UPEC), this protein is Glutathione S-transferase GstB (gstB).